The chain runs to 502 residues: Glycerol kinase (502 aa).

ADP is bound at residue Thr13. Residues Thr13, Thr14, and Ser15 each contribute to the ATP site. Thr13 lines the sn-glycerol 3-phosphate pocket. Residue Arg17 coordinates ADP. Sn-glycerol 3-phosphate contacts are provided by Arg83, Glu84, Tyr136, and Asp246. Residues Arg83, Glu84, Tyr136, Asp246, and Gln247 each contribute to the glycerol site. Residues Thr268 and Gly311 each contribute to the ADP site. ATP contacts are provided by Thr268, Gly311, Gln315, and Gly412. ADP-binding residues include Gly412 and Asn416.

This sequence belongs to the FGGY kinase family.

It catalyses the reaction glycerol + ATP = sn-glycerol 3-phosphate + ADP + H(+). Its pathway is polyol metabolism; glycerol degradation via glycerol kinase pathway; sn-glycerol 3-phosphate from glycerol: step 1/1. Inhibited by fructose 1,6-bisphosphate (FBP). In terms of biological role, key enzyme in the regulation of glycerol uptake and metabolism. Catalyzes the phosphorylation of glycerol to yield sn-glycerol 3-phosphate. In Francisella tularensis subsp. tularensis (strain WY96-3418), this protein is Glycerol kinase.